The primary structure comprises 142 residues: Photosystem II extrinsic protein U (142 aa).

Positions 1–29 (MKGLVRLLTVFSLLLGCWGWLGTTQIAQA) are cleaved as a signal peptide.

This sequence belongs to the PsbU family. In terms of assembly, PSII is composed of 1 copy each of membrane proteins PsbA, PsbB, PsbC, PsbD, PsbE, PsbF, PsbH, PsbI, PsbJ, PsbK, PsbL, PsbM, PsbT, PsbX, PsbY, PsbZ, Psb30/Ycf12, peripheral proteins PsbO, CyanoQ (PsbQ), PsbU, PsbV and a large number of cofactors. It forms dimeric complexes.

It is found in the cellular thylakoid membrane. Functionally, one of the extrinsic, lumenal subunits of photosystem II (PSII). PSII is a light-driven water plastoquinone oxidoreductase, using light energy to abstract electrons from H(2)O, generating a proton gradient subsequently used for ATP formation. The extrinsic proteins stabilize the structure of photosystem II oxygen-evolving complex (OEC), the ion environment of oxygen evolution and protect the OEC against heat-induced inactivation. This Nostoc sp. (strain PCC 7120 / SAG 25.82 / UTEX 2576) protein is Photosystem II extrinsic protein U.